We begin with the raw amino-acid sequence, 151 residues long: UPF0208 membrane protein YfbV (151 aa).

At 1 to 45 (MSTPDNRSVNFFSLFCRGQHYSKTWPLEKRLAPVFVENRVIKMTR) the chain is on the cytoplasmic side. The helical transmembrane segment at 46 to 65 (YAIRFMPPIAVFTLCWQIAL) threads the bilayer. The Periplasmic segment spans residues 66–68 (GGQ). A helical transmembrane segment spans residues 69–91 (LGPAVATALFALSLPMQGLWWLG). Residues 92–151 (KRSVTPLPPAILNWFYEVRGKLQESGQVLAPVEGKPDYQALADTLKRAFKQLDKTFLDDL) are Cytoplasmic-facing.

Belongs to the UPF0208 family.

The protein resides in the cell inner membrane. This chain is UPF0208 membrane protein YfbV (yfbV), found in Escherichia coli O6:H1 (strain CFT073 / ATCC 700928 / UPEC).